The sequence spans 214 residues: ATP phosphoribosyltransferase (214 aa).

Belongs to the ATP phosphoribosyltransferase family. Short subfamily. In terms of assembly, heteromultimer composed of HisG and HisZ subunits.

It is found in the cytoplasm. The catalysed reaction is 1-(5-phospho-beta-D-ribosyl)-ATP + diphosphate = 5-phospho-alpha-D-ribose 1-diphosphate + ATP. It functions in the pathway amino-acid biosynthesis; L-histidine biosynthesis; L-histidine from 5-phospho-alpha-D-ribose 1-diphosphate: step 1/9. In terms of biological role, catalyzes the condensation of ATP and 5-phosphoribose 1-diphosphate to form N'-(5'-phosphoribosyl)-ATP (PR-ATP). Has a crucial role in the pathway because the rate of histidine biosynthesis seems to be controlled primarily by regulation of HisG enzymatic activity. The protein is ATP phosphoribosyltransferase of Deinococcus deserti (strain DSM 17065 / CIP 109153 / LMG 22923 / VCD115).